The following is a 190-amino-acid chain: Ribosome hibernation promotion factor (190 aa).

The tract at residues 101-190 is required for ribosome-binding; the sequence is RDRGDQEVFV…KYGLIQTSEQ (90 aa).

It belongs to the HPF/YfiA ribosome-associated protein family. Long HPF subfamily. In terms of assembly, interacts with 100S ribosomes during exponential growth, as 100S ribosomes decrease (after 28 hours) also found associated with 30s and 50S subunits.

It is found in the cytoplasm. Functionally, required and sufficient for dimerization of active 70S ribosomes into 100S ribosomes. 110S ribosomes are probably translationally inactive and may serve as a reservoir of easily reactivated ribosomes when necessary in the cell. Also reduces the translation efficiency of a small number of genes. Unlike E.coli, 100S ribosomes are present during exponential growth and decrease during stationary phase. This strain produces 30% fewer 100S ribosomes than strain N315 and RN4200 under the same growth conditions. This Staphylococcus aureus (strain USA300) protein is Ribosome hibernation promotion factor.